Here is a 395-residue protein sequence, read N- to C-terminus: Acetate kinase (395 aa).

Residue N7 coordinates Mg(2+). K14 is an ATP binding site. R92 contributes to the substrate binding site. D149 serves as the catalytic Proton donor/acceptor. Residues H207–G211, D282–R284, and G329–N333 each bind ATP. A Mg(2+)-binding site is contributed by E382.

It belongs to the acetokinase family. As to quaternary structure, homodimer. The cofactor is Mg(2+). Requires Mn(2+) as cofactor.

It is found in the cytoplasm. The catalysed reaction is acetate + ATP = acetyl phosphate + ADP. Its pathway is metabolic intermediate biosynthesis; acetyl-CoA biosynthesis; acetyl-CoA from acetate: step 1/2. Its function is as follows. Catalyzes the formation of acetyl phosphate from acetate and ATP. Can also catalyze the reverse reaction. The polypeptide is Acetate kinase (Brachyspira hyodysenteriae (strain ATCC 49526 / WA1)).